The primary structure comprises 394 residues: Methionine import ATP-binding protein MetN 2 (394 aa).

In terms of domain architecture, ABC transporter spans 39 to 278 (VSLEQVGKVF…PRHGATRALL (240 aa)). 75 to 82 (GRSGAGKS) is an ATP binding site.

This sequence belongs to the ABC transporter superfamily. Methionine importer (TC 3.A.1.24) family. As to quaternary structure, the complex is composed of two ATP-binding proteins (MetN), two transmembrane proteins (MetI) and a solute-binding protein (MetQ).

It localises to the cell inner membrane. The catalysed reaction is L-methionine(out) + ATP + H2O = L-methionine(in) + ADP + phosphate + H(+). The enzyme catalyses D-methionine(out) + ATP + H2O = D-methionine(in) + ADP + phosphate + H(+). In terms of biological role, part of the ABC transporter complex MetNIQ involved in methionine import. Responsible for energy coupling to the transport system. The polypeptide is Methionine import ATP-binding protein MetN 2 (Burkholderia cenocepacia (strain HI2424)).